The following is a 332-amino-acid chain: CMRF35-like molecule 9 (332 aa).

The signal sequence occupies residues 1-18; sequence MRLLVLLWGCLLLPGYEA. The region spanning 19–121 is the Ig-like V-type domain; sequence LEGPEEISGF…RGPDESLLIS (103 aa). At 19 to 247 the chain is on the extracellular side; it reads LEGPEEISGF…KPRVSIPMVR (229 aa). The cysteines at positions 37 and 107 are disulfide-linked. A glycan (N-linked (GlcNAc...) asparagine) is linked at Asn-96. Thr-137, Thr-143, Thr-144, Thr-155, Thr-161, Thr-170, Thr-171, Thr-177, Thr-187, and Thr-195 each carry an O-linked (GalNAc...) threonine glycan. The interval 146 to 239 is disordered; that stretch reads LQPKAKAQQT…PALSSGSSKP (94 aa). Residues 147–158 show a composition bias toward low complexity; the sequence is QPKAKAQQTQPP. The segment covering 168-181 has biased composition (low complexity); that stretch reads AATTAKQGKTGAEA. Positions 186 to 205 are enriched in polar residues; it reads GTSQYGHERTSQYTGTSPHP. Ser-196 carries O-linked (GalNAc...) serine glycosylation. O-linked (GalNAc...) threonine glycosylation is found at Thr-199 and Thr-201. Residue Ser-202 is glycosylated (O-linked (GalNAc...) serine). Residue Thr-207 is glycosylated (O-linked (GalNAc...) threonine). Residues Ser-208, Ser-213, Ser-214, and Ser-222 are each glycosylated (O-linked (GalNAc...) serine). The segment covering 220–239 has biased composition (polar residues); that stretch reads LDSTSAEDTSPALSSGSSKP. O-linked (GalNAc...) threonine glycosylation is present at Thr-223. O-linked (GalNAc...) serine glycosylation occurs at Ser-224. A glycan (O-linked (GalNAc...) threonine) is linked at Thr-228. Residues Ser-229 and Ser-237 are each glycosylated (O-linked (GalNAc...) serine). The chain crosses the membrane as a helical span at residues 248-268; it reads ILAPVLVLLSLLSAAGLIAFC. At 269–332 the chain is on the cytoplasmic side; that stretch reads SHLLLWRKEA…ELGFSKFVSA (64 aa).

The protein belongs to the CD300 family. Post-translationally, O-glycosylated with sialylated oligosaccharides. As to expression, highly expressed in heart, skeletal muscle and placenta.

It is found in the apical cell membrane. Its subcellular location is the basolateral cell membrane. It localises to the endosome. The protein resides in the multivesicular body membrane. In terms of biological role, receptor which may mediate L-selectin-dependent lymphocyte rollings. Binds SELL in a calcium dependent manner. Binds lymphocyte. The sequence is that of CMRF35-like molecule 9 (CD300LG) from Homo sapiens (Human).